The sequence spans 372 residues: Cytochrome b (372 aa).

Helical transmembrane passes span Phe-25–Ile-45, Trp-69–Ile-90, Trp-105–Leu-125, and Phe-170–Met-190. Residues His-75 and His-89 each coordinate heme b. Positions 174 and 188 each coordinate heme b. His-193 contacts a ubiquinone. 4 helical membrane passes run His-218–Thr-238, Leu-280–His-300, Leu-312–Thr-332, and Phe-339–Pro-358.

Belongs to the cytochrome b family. The cytochrome bc1 complex contains 3 respiratory subunits (MT-CYB, CYC1 and UQCRFS1), 2 core proteins (UQCRC1 and UQCRC2) and probably 6 low-molecular weight proteins. It depends on heme b as a cofactor.

The protein localises to the mitochondrion inner membrane. Component of the ubiquinol-cytochrome c reductase complex (complex III or cytochrome b-c1 complex) that is part of the mitochondrial respiratory chain. The b-c1 complex mediates electron transfer from ubiquinol to cytochrome c. Contributes to the generation of a proton gradient across the mitochondrial membrane that is then used for ATP synthesis. This Lycodon semicarinatus (Ryukyu odd-tooth snake) protein is Cytochrome b (MT-CYB).